The chain runs to 884 residues: Protein translocase subunit SecA (884 aa).

ATP is bound by residues Gln83, 101-105 (GEGKT), and Asp491.

The protein belongs to the SecA family.

The protein localises to the plastid. The protein resides in the chloroplast stroma. It is found in the chloroplast thylakoid membrane. The enzyme catalyses ATP + H2O + cellular proteinSide 1 = ADP + phosphate + cellular proteinSide 2.. Has a central role in coupling the hydrolysis of ATP to the transfer of proteins across the thylakoid membrane. This is Protein translocase subunit SecA from Pyropia yezoensis (Susabi-nori).